A 97-amino-acid polypeptide reads, in one-letter code: Small ribosomal subunit protein uS19 (97 aa).

The protein belongs to the universal ribosomal protein uS19 family.

Its function is as follows. Protein S19 forms a complex with S13 that binds strongly to the 16S ribosomal RNA. This chain is Small ribosomal subunit protein uS19, found in Pelagibacter ubique (strain HTCC1062).